The chain runs to 365 residues: Donuts protein 1 (365 aa).

Residues 28-49 are disordered; sequence NSGLELPSQDYTNVEEKESSPK. Residues 82–125 form the CUE domain; that stretch reads EKLCVLKELKIAFPEVDDTLIKAILIASQGVLEPAFNSLLYYSS. Disordered stretches follow at residues 215–246 and 286–335; these read HNTILSNEDSILKGKEKGKEEEKEKGEEKGVN and ESEE…YKSA. Basic and acidic residues predominate over residues 224-244; it reads SILKGKEKGKEEEKEKGEEKG. Over residues 286–295 the composition is skewed to acidic residues; that stretch reads ESEEEEEQDV. Basic and acidic residues predominate over residues 315-331; it reads EAQRDSADRLPAKDDGG.

In terms of assembly, may interact directly with ADY3. Probable component of a spindle pole body (SPB) complex composed of ADY3, SSP1, DON1, MPC54, SPO21/MPC70, NUD1 and CNM67.

The protein resides in the prospore membrane. Involved in the pathway that organizes the prospore membrane (PSM) during sporulation. The polypeptide is Donuts protein 1 (DON1) (Saccharomyces cerevisiae (strain ATCC 204508 / S288c) (Baker's yeast)).